The following is a 423-amino-acid chain: D-threonate kinase (423 aa).

Substrate contacts are provided by residues aspartate 9, arginine 51, and 81-84 (KIDS). ATP contacts are provided by residues serine 245, 355-358 (GGDI), and glycine 401.

It belongs to the four-carbon acid sugar kinase family.

It catalyses the reaction D-threonate + ATP = 4-O-phospho-D-threonate + ADP + H(+). Its function is as follows. Catalyzes the ATP-dependent phosphorylation of D-threonate to D-threonate 4-phosphate. Can also phosphorylate 4-hydroxy-L-threonine, with lower efficiency. This side reaction may serve to deal with the toxicity of 4-hydroxy-L-threonine by converting it into 4-hydroxy-L-threonine 4-phosphate, a useful product that can be used by PdxA2. This Salmonella typhimurium (strain LT2 / SGSC1412 / ATCC 700720) protein is D-threonate kinase.